The sequence spans 238 residues: Tetrahydromethanopterin S-methyltransferase subunit A 1 (238 aa).

The Cytoplasmic portion of the chain corresponds to 2–218; that stretch reads VEKKSPAEGW…RMFAGMYSGK (217 aa). Histidine 84 is a binding site for 5-hydroxybenzimidazolylcob(I)amide. The helical transmembrane segment at 219–237 threads the bilayer; sequence VQGIMIGLAFTLTLGILLL. Valine 238 is a topological domain (extracellular).

This sequence belongs to the MtrA family. As to quaternary structure, the complex is composed of 8 subunits; MtrA, MtrB, MtrC, MtrD, MtrE, MtrF, MtrG and MtrH. 5-hydroxybenzimidazolylcob(I)amide serves as cofactor.

It localises to the cell membrane. It carries out the reaction 5-methyl-5,6,7,8-tetrahydromethanopterin + coenzyme M + 2 Na(+)(in) = 5,6,7,8-tetrahydromethanopterin + methyl-coenzyme M + 2 Na(+)(out). The protein operates within one-carbon metabolism; methanogenesis from CO(2); methyl-coenzyme M from 5,10-methylene-5,6,7,8-tetrahydromethanopterin: step 2/2. Part of a complex that catalyzes the formation of methyl-coenzyme M and tetrahydromethanopterin from coenzyme M and methyl-tetrahydromethanopterin. This is an energy-conserving, sodium-ion translocating step. The sequence is that of Tetrahydromethanopterin S-methyltransferase subunit A 1 from Methanothermobacter thermautotrophicus (strain ATCC 29096 / DSM 1053 / JCM 10044 / NBRC 100330 / Delta H) (Methanobacterium thermoautotrophicum).